The sequence spans 177 residues: Large ribosomal subunit protein uL6 (177 aa).

The protein belongs to the universal ribosomal protein uL6 family. As to quaternary structure, part of the 50S ribosomal subunit.

This protein binds to the 23S rRNA, and is important in its secondary structure. It is located near the subunit interface in the base of the L7/L12 stalk, and near the tRNA binding site of the peptidyltransferase center. This is Large ribosomal subunit protein uL6 from Pectobacterium carotovorum subsp. carotovorum (strain PC1).